The following is a 616-amino-acid chain: Membrane protein insertase YidC (616 aa).

Residues 9 to 29 (ILAVILSGLVLIAWQYFYNVP) form a helical membrane-spanning segment. The segment at 37 to 80 (QQQAQAELQKTTPQPTASATPGATPQSGGAAQPSTPAAGQQAQP) is disordered. Residues 44–71 (LQKTTPQPTASATPGATPQSGGAAQPST) show a composition bias toward polar residues. Transmembrane regions (helical) follow at residues 388–408 (FFGN…LLFF), 462–482 (LPVV…FVTI), 520–540 (VFGH…TMWF), and 559–579 (WMPL…VIYW).

Belongs to the OXA1/ALB3/YidC family. Type 1 subfamily. Interacts with the Sec translocase complex via SecD. Specifically interacts with transmembrane segments of nascent integral membrane proteins during membrane integration.

It localises to the cell inner membrane. Its function is as follows. Required for the insertion and/or proper folding and/or complex formation of integral membrane proteins into the membrane. Involved in integration of membrane proteins that insert both dependently and independently of the Sec translocase complex, as well as at least some lipoproteins. Aids folding of multispanning membrane proteins. The polypeptide is Membrane protein insertase YidC (Bradyrhizobium diazoefficiens (strain JCM 10833 / BCRC 13528 / IAM 13628 / NBRC 14792 / USDA 110)).